The following is a 141-amino-acid chain: Putative pre-16S rRNA nuclease (141 aa).

Belongs to the YqgF nuclease family.

It is found in the cytoplasm. Could be a nuclease involved in processing of the 5'-end of pre-16S rRNA. This chain is Putative pre-16S rRNA nuclease, found in Chlorobium luteolum (strain DSM 273 / BCRC 81028 / 2530) (Pelodictyon luteolum).